We begin with the raw amino-acid sequence, 196 residues long: Lipoprotein signal peptidase (196 aa).

Helical transmembrane passes span 43–63 (LMLK…GISF), 75–95 (AIFL…MICS), and 97–117 (TIGS…NLID). Catalysis depends on residues aspartate 126 and aspartate 144. A helical membrane pass occupies residues 135–155 (YSFPVFNLADCFITLGVIILI).

Belongs to the peptidase A8 family.

The protein resides in the cell inner membrane. It catalyses the reaction Release of signal peptides from bacterial membrane prolipoproteins. Hydrolyzes -Xaa-Yaa-Zaa-|-(S,diacylglyceryl)Cys-, in which Xaa is hydrophobic (preferably Leu), and Yaa (Ala or Ser) and Zaa (Gly or Ala) have small, neutral side chains.. It functions in the pathway protein modification; lipoprotein biosynthesis (signal peptide cleavage). Its function is as follows. This protein specifically catalyzes the removal of signal peptides from prolipoproteins. The protein is Lipoprotein signal peptidase of Rickettsia typhi (strain ATCC VR-144 / Wilmington).